Reading from the N-terminus, the 346-residue chain is DNA-directed RNA polymerases I and III subunit RPAC1 (346 aa).

At Ala2 the chain carries N-acetylalanine.

It belongs to the archaeal Rpo3/eukaryotic RPB3 RNA polymerase subunit family. In terms of assembly, component of the RNA polymerase I and RNA polymerase III complexes consisting of at least 13 and 17 subunits, respectively. Pol I complex consists of a ten-subunit catalytic core composed of POLR1A/RPA1, POLR1B/RPA2, POLR1C/RPAC1, POLR1D/RPAC2, POLR1H/RPA12, POLR2E/RPABC1, POLR2F/RPABC2, POLR2H/RPABC3, POLR2K/RPABC4 and POLR2L/RPABC5; a mobile stalk subunit POLR1F/RPA43 protruding from the core and additional subunits homologous to general transcription factors POLR1E/RPA49 and POLR1G/RPA34. Part of Pol I pre-initiation complex (PIC), in which Pol I core assembles with RRN3 and promoter-bound UTBF and SL1/TIF-IB complex. Pol III complex consists of a ten-subunit catalytic core composed of POLR3A/RPC1, POLR3B/RPC2, POLR1C/RPAC1, POLR1D/RPAC2, POLR3K/RPC10, POLR2E/RPABC1, POLR2F/RPABC2, POLR2H/RPABC3, POLR2K/RPABC4 and POLR2L/RPABC5; a mobile stalk composed of two subunits POLR3H/RPC8 and CRCP/RPC9, protruding from the core and functioning primarily in transcription initiation; and additional subunits homologous to general transcription factors of the RNA polymerase II machinery, POLR3C/RPC3-POLR3F/RPC6-POLR3G/RPC7 heterotrimer required for transcription initiation and POLR3D/RPC4-POLR3E/RPC5 heterodimer involved in both transcription initiation and termination.

It is found in the nucleus. The protein resides in the cytoplasm. It localises to the cytosol. In terms of biological role, DNA-dependent RNA polymerase catalyzes the transcription of DNA into RNA using the four ribonucleoside triphosphates as substrates. Common component of RNA polymerases I and III which synthesize ribosomal RNA precursors and short non-coding RNAs including 5S rRNA, snRNAs, tRNAs and miRNAs, respectively. POLR1C/RPAC1 is part of the polymerase core and may function as a clamp element that moves to open and close the cleft. The polypeptide is DNA-directed RNA polymerases I and III subunit RPAC1 (POLR1C) (Bos taurus (Bovine)).